A 223-amino-acid polypeptide reads, in one-letter code: Ribonuclease 3 (223 aa).

An RNase III domain is found at 1-131 (MDGVDELLLR…LIGAVMVDQG (131 aa)). Glu-44 is a Mg(2+) binding site. Asp-48 is a catalytic residue. Mg(2+)-binding residues include Asp-117 and Glu-120. Glu-120 is a catalytic residue. In terms of domain architecture, DRBM spans 157–220 (DPKTKLQKLT…AMSALASLEN (64 aa)).

This sequence belongs to the ribonuclease III family. Homodimer. It depends on Mg(2+) as a cofactor.

The protein resides in the cytoplasm. The enzyme catalyses Endonucleolytic cleavage to 5'-phosphomonoester.. Functionally, digests double-stranded RNA. Involved in the processing of primary rRNA transcript to yield the immediate precursors to the large and small rRNAs (23S and 16S). Processes some mRNAs, and tRNAs when they are encoded in the rRNA operon. Processes pre-crRNA and tracrRNA of type II CRISPR loci if present in the organism. The chain is Ribonuclease 3 from Tropheryma whipplei (strain Twist) (Whipple's bacillus).